The sequence spans 562 residues: Phosphoglucomutase-1 (562 aa).

The residue at position 1 (methionine 1) is an N-acetylmethionine. Position 16 is an N6-acetyllysine (lysine 16). Residue arginine 23 participates in alpha-D-glucose 1,6-bisphosphate binding. Threonine 115 carries the post-translational modification Phosphothreonine. Serine 117 serves as a coordination point for alpha-D-glucose 1,6-bisphosphate. The active-site Phosphoserine intermediate is serine 117. Serine 117 serves as a coordination point for Mg(2+). Residues serine 117 and serine 134 each carry the phosphoserine modification. The residue at position 185 (threonine 185) is a Phosphothreonine. Serine 201, serine 206, and serine 213 each carry phosphoserine. Positions 288, 290, and 292 each coordinate Mg(2+). Residues aspartate 292 and arginine 293 each coordinate alpha-D-glucose 1,6-bisphosphate. The residue at position 349 (lysine 349) is an N6-acetyllysine. Tyrosine 353 is modified (phosphotyrosine). Threonine 357 contacts alpha-D-glucose 1,6-bisphosphate. Serine 369 bears the Phosphoserine mark. 3 residues coordinate alpha-D-glucose 1,6-bisphosphate: glutamate 376, serine 378, and lysine 389. The residue at position 378 (serine 378) is a Phosphoserine. At lysine 419 the chain carries N6-succinyllysine. Threonine 467 is modified (phosphothreonine; by PAK1). Serine 477, serine 485, and serine 505 each carry phosphoserine. Threonine 507 carries the phosphothreonine modification. 2 positions are modified to phosphoserine: serine 509 and serine 541.

Belongs to the phosphohexose mutase family. Monomer. It depends on Mg(2+) as a cofactor. In terms of processing, phosphorylation at Thr-467 by PAK1 significantly enhances enzymatic activity.

The protein localises to the cytoplasm. The catalysed reaction is alpha-D-glucose 1-phosphate = alpha-D-glucose 6-phosphate. The enzyme catalyses O-phospho-L-seryl-[protein] + alpha-D-glucose 1-phosphate = alpha-D-glucose 1,6-bisphosphate + L-seryl-[protein]. It catalyses the reaction alpha-D-glucose 1,6-bisphosphate + L-seryl-[protein] = O-phospho-L-seryl-[protein] + alpha-D-glucose 6-phosphate. Glucose-1,6-bisphosphate enhances phosphorylation of the active site Ser-117, and thereby increases enzyme activity. Its function is as follows. Catalyzes the reversible isomerization of alpha-D-glucose 1-phosphate to alpha-D-glucose 6-phosphate. The mechanism proceeds via the intermediate compound alpha-D-glucose 1,6-bisphosphate. This enzyme participates in both the breakdown and synthesis of glucose. This is Phosphoglucomutase-1 (PGM1) from Homo sapiens (Human).